Here is an 857-residue protein sequence, read N- to C-terminus: RNA-directed RNA polymerase 2a (857 aa).

Positions 511–624 (KYCLEIDLSK…FSLLPPVGDP (114 aa)) constitute a RdRp catalytic domain. Residues 785 to 857 (DDKRRTPTGS…PRERGGVTRA (73 aa)) form a disordered region. 2 stretches are compositionally biased toward polar residues: residues 804 to 816 (KVSQ…TRSQ) and 824 to 840 (FKSQ…SGWS). A compositionally biased stretch (basic and acidic residues) spans 846-857 (VPPRERGGVTRA).

Belongs to the ssRNA positive-strand viruses RNA-directed RNA polymerase family. Interacts with replication protein 1a.

It carries out the reaction RNA(n) + a ribonucleoside 5'-triphosphate = RNA(n+1) + diphosphate. Functionally, RNA-dependent RNA polymerase which replicates the viral genome composed of 3 RNA segments, RNA1, RNA2 and RNA3. This is RNA-directed RNA polymerase 2a from Cucumis sativus (Cucumber).